We begin with the raw amino-acid sequence, 601 residues long: Elongation factor 4 (601 aa).

The tr-type G domain maps to 6–188 (QFIRNFSIIA…AITKEIPAPK (183 aa)). GTP contacts are provided by residues 18–23 (DHGKST) and 135–138 (NKID).

Belongs to the TRAFAC class translation factor GTPase superfamily. Classic translation factor GTPase family. LepA subfamily.

The protein resides in the cell inner membrane. The enzyme catalyses GTP + H2O = GDP + phosphate + H(+). Required for accurate and efficient protein synthesis under certain stress conditions. May act as a fidelity factor of the translation reaction, by catalyzing a one-codon backward translocation of tRNAs on improperly translocated ribosomes. Back-translocation proceeds from a post-translocation (POST) complex to a pre-translocation (PRE) complex, thus giving elongation factor G a second chance to translocate the tRNAs correctly. Binds to ribosomes in a GTP-dependent manner. In Leptospira borgpetersenii serovar Hardjo-bovis (strain JB197), this protein is Elongation factor 4.